The following is a 304-amino-acid chain: tRNA-uridine aminocarboxypropyltransferase 1 (304 aa).

Residues 1–30 are disordered; sequence MALSPSVVPQESEENNANCVETKQSQTAST. Positions 15–30 are enriched in polar residues; it reads NNANCVETKQSQTAST. Positions 206–209 match the DXTW motif; the sequence is DSTW.

This sequence belongs to the TDD superfamily. DTWD1 family.

The protein resides in the nucleus. It catalyses the reaction a uridine in tRNA + S-adenosyl-L-methionine = a 3-[(3S)-3-amino-3-carboxypropyl]uridine in tRNA + S-methyl-5'-thioadenosine + H(+). Functionally, catalyzes the formation of 3-(3-amino-3-carboxypropyl)uridine (acp3U) at position 20 in the D-loop of several cytoplasmic tRNAs (acp3U(20)). The polypeptide is tRNA-uridine aminocarboxypropyltransferase 1 (Rattus norvegicus (Rat)).